A 173-amino-acid chain; its full sequence is Co-chaperone protein HscB homolog (173 aa).

The region spanning 5–77 (CHYALFDLQP…PRRARYLLAI (73 aa)) is the J domain.

This sequence belongs to the HscB family. As to quaternary structure, interacts with HscA and stimulates its ATPase activity.

In terms of biological role, co-chaperone involved in the maturation of iron-sulfur cluster-containing proteins. Seems to help targeting proteins to be folded toward HscA. The sequence is that of Co-chaperone protein HscB homolog from Pseudomonas putida (strain ATCC 700007 / DSM 6899 / JCM 31910 / BCRC 17059 / LMG 24140 / F1).